The primary structure comprises 476 residues: Glutamyl-tRNA(Gln) amidotransferase subunit A (476 aa).

Residues Lys70 and Ser145 each act as charge relay system in the active site. Ser169 serves as the catalytic Acyl-ester intermediate.

It belongs to the amidase family. GatA subfamily. As to quaternary structure, heterotrimer of A, B and C subunits.

The enzyme catalyses L-glutamyl-tRNA(Gln) + L-glutamine + ATP + H2O = L-glutaminyl-tRNA(Gln) + L-glutamate + ADP + phosphate + H(+). Functionally, allows the formation of correctly charged Gln-tRNA(Gln) through the transamidation of misacylated Glu-tRNA(Gln) in organisms which lack glutaminyl-tRNA synthetase. The reaction takes place in the presence of glutamine and ATP through an activated gamma-phospho-Glu-tRNA(Gln). The chain is Glutamyl-tRNA(Gln) amidotransferase subunit A from Methanosarcina mazei (strain ATCC BAA-159 / DSM 3647 / Goe1 / Go1 / JCM 11833 / OCM 88) (Methanosarcina frisia).